The sequence spans 218 residues: Small ribosomal subunit protein mS34 (218 aa).

This sequence belongs to the mitochondrion-specific ribosomal protein mS34 family. In terms of assembly, component of the mitochondrial ribosome small subunit (28S) which comprises a 12S rRNA and about 30 distinct proteins. Widely expressed (at protein liver).

It is found in the mitochondrion. Its function is as follows. Required for mitochondrial translation, plays a role in maintaining the stability of the small ribosomal subunit and the 12S rRNA that are required for mitoribosome formation. In Mus musculus (Mouse), this protein is Small ribosomal subunit protein mS34 (Mrps34).